Here is a 392-residue protein sequence, read N- to C-terminus: Protein RecA (392 aa).

Residues 1 to 21 (MALETKPAQDPATEIKHELDP) form a disordered region. 83-90 (GPESSGKT) lines the ATP pocket. The disordered stretch occupies residues 372–392 (DAAKDTKATAAPAAKSSRAKA). A compositionally biased stretch (low complexity) spans 379 to 392 (ATAAPAAKSSRAKA).

It belongs to the RecA family.

Its subcellular location is the cytoplasm. Its function is as follows. Can catalyze the hydrolysis of ATP in the presence of single-stranded DNA, the ATP-dependent uptake of single-stranded DNA by duplex DNA, and the ATP-dependent hybridization of homologous single-stranded DNAs. It interacts with LexA causing its activation and leading to its autocatalytic cleavage. The polypeptide is Protein RecA (Bifidobacterium breve).